A 505-amino-acid polypeptide reads, in one-letter code: Probable alpha-L-arabinofuranosidase C (505 aa).

N-linked (GlcNAc...) asparagine glycans are attached at residues N152, N181, and N269.

The protein belongs to the glycosyl hydrolase 51 family.

Its subcellular location is the secreted. The enzyme catalyses Hydrolysis of terminal non-reducing alpha-L-arabinofuranoside residues in alpha-L-arabinosides.. It functions in the pathway glycan metabolism; L-arabinan degradation. Alpha-L-arabinofuranosidase involved in the degradation of arabinoxylan, a major component of plant hemicellulose. Acts only on small linear 1,5-alpha-linked L-arabinofuranosyl oligosaccharides. In Aspergillus niger (strain ATCC MYA-4892 / CBS 513.88 / FGSC A1513), this protein is Probable alpha-L-arabinofuranosidase C (abfC).